A 157-amino-acid chain; its full sequence is Ribosome-binding factor A (157 aa).

The disordered stretch occupies residues 127 to 157; it reads QQQFGSEEASVEDEVLGDDVADDADETEGKD. Positions 135–157 are enriched in acidic residues; sequence ASVEDEVLGDDVADDADETEGKD.

Belongs to the RbfA family. As to quaternary structure, monomer. Binds 30S ribosomal subunits, but not 50S ribosomal subunits or 70S ribosomes.

It localises to the cytoplasm. One of several proteins that assist in the late maturation steps of the functional core of the 30S ribosomal subunit. Associates with free 30S ribosomal subunits (but not with 30S subunits that are part of 70S ribosomes or polysomes). Required for efficient processing of 16S rRNA. May interact with the 5'-terminal helix region of 16S rRNA. The protein is Ribosome-binding factor A of Shewanella baltica (strain OS195).